We begin with the raw amino-acid sequence, 571 residues long: Proline--tRNA ligase (571 aa).

This sequence belongs to the class-II aminoacyl-tRNA synthetase family. ProS type 1 subfamily. In terms of assembly, homodimer.

It localises to the cytoplasm. It catalyses the reaction tRNA(Pro) + L-proline + ATP = L-prolyl-tRNA(Pro) + AMP + diphosphate. Functionally, catalyzes the attachment of proline to tRNA(Pro) in a two-step reaction: proline is first activated by ATP to form Pro-AMP and then transferred to the acceptor end of tRNA(Pro). As ProRS can inadvertently accommodate and process non-cognate amino acids such as alanine and cysteine, to avoid such errors it has two additional distinct editing activities against alanine. One activity is designated as 'pretransfer' editing and involves the tRNA(Pro)-independent hydrolysis of activated Ala-AMP. The other activity is designated 'posttransfer' editing and involves deacylation of mischarged Ala-tRNA(Pro). The misacylated Cys-tRNA(Pro) is not edited by ProRS. In Pseudoalteromonas atlantica (strain T6c / ATCC BAA-1087), this protein is Proline--tRNA ligase.